Reading from the N-terminus, the 751-residue chain is Phosphoribosylformylglycinamidine synthase subunit PurL (751 aa).

The active site involves His-54. ATP-binding residues include Tyr-57 and Lys-106. Glu-108 contacts Mg(2+). Substrate contacts are provided by residues 109–112 (SHNH) and Arg-131. The active-site Proton acceptor is the His-110. Asp-132 serves as a coordination point for Mg(2+). Position 256 (Gln-256) interacts with substrate. Asp-284 is a Mg(2+) binding site. A substrate-binding site is contributed by 328–330 (ESQ). Residues Asp-516 and Gly-553 each coordinate ATP. Asn-554 provides a ligand contact to Mg(2+). Position 556 (Ser-556) interacts with substrate.

Belongs to the FGAMS family. As to quaternary structure, monomer. Part of the FGAM synthase complex composed of 1 PurL, 1 PurQ and 2 PurS subunits.

Its subcellular location is the cytoplasm. The enzyme catalyses N(2)-formyl-N(1)-(5-phospho-beta-D-ribosyl)glycinamide + L-glutamine + ATP + H2O = 2-formamido-N(1)-(5-O-phospho-beta-D-ribosyl)acetamidine + L-glutamate + ADP + phosphate + H(+). Its pathway is purine metabolism; IMP biosynthesis via de novo pathway; 5-amino-1-(5-phospho-D-ribosyl)imidazole from N(2)-formyl-N(1)-(5-phospho-D-ribosyl)glycinamide: step 1/2. In terms of biological role, part of the phosphoribosylformylglycinamidine synthase complex involved in the purines biosynthetic pathway. Catalyzes the ATP-dependent conversion of formylglycinamide ribonucleotide (FGAR) and glutamine to yield formylglycinamidine ribonucleotide (FGAM) and glutamate. The FGAM synthase complex is composed of three subunits. PurQ produces an ammonia molecule by converting glutamine to glutamate. PurL transfers the ammonia molecule to FGAR to form FGAM in an ATP-dependent manner. PurS interacts with PurQ and PurL and is thought to assist in the transfer of the ammonia molecule from PurQ to PurL. The sequence is that of Phosphoribosylformylglycinamidine synthase subunit PurL from Nocardioides sp. (strain ATCC BAA-499 / JS614).